A 125-amino-acid chain; its full sequence is Classical arabinogalactan protein 27 (125 aa).

A signal peptide spans 1 to 21 (MASSILLTLITFIFLSSLSLS). Residues 20 to 36 (LSSPTTNTIPSSQTISP) show a composition bias toward low complexity. A disordered region spans residues 20–95 (LSSPTTNTIP…ASPPASSLAS (76 aa)). Positions 53–66 (AVSSTQTIPSSSTL) are enriched in polar residues. The segment covering 77-95 (DPDPAFAPSASPPASSLAS) has biased composition (low complexity). S98 is lipidated: GPI-anchor amidated serine. Residues 99-125 (QAPGVFIYFVFAAVYCFSLRLLAVSAI) constitute a propeptide, removed in mature form.

It belongs to the classical AGP family. Post-translationally, O-glycosylated on the hydroxyproline residues.

The protein localises to the cell membrane. Its function is as follows. Proteoglycan that seems to be implicated in diverse developmental roles such as differentiation, cell-cell recognition, embryogenesis and programmed cell death. The polypeptide is Classical arabinogalactan protein 27 (AGP27) (Arabidopsis thaliana (Mouse-ear cress)).